Reading from the N-terminus, the 339-residue chain is Ketol-acid reductoisomerase (NADP(+)) (339 aa).

The region spanning 1-182 is the KARI N-terminal Rossmann domain; the sequence is MRVYYDRDAD…GGGRAGIIET (182 aa). Residues 24-27, arginine 48, serine 51, threonine 53, and 83-86 each bind NADP(+); these read YGSQ and DELQ. Histidine 108 is a catalytic residue. Glycine 134 is an NADP(+) binding site. The KARI C-terminal knotted domain maps to 183–328; the sequence is TFKEECETDL…AELRAMMPWI (146 aa). Positions 191, 195, 227, and 231 each coordinate Mg(2+). Serine 252 lines the substrate pocket.

This sequence belongs to the ketol-acid reductoisomerase family. The cofactor is Mg(2+).

It carries out the reaction (2R)-2,3-dihydroxy-3-methylbutanoate + NADP(+) = (2S)-2-acetolactate + NADPH + H(+). It catalyses the reaction (2R,3R)-2,3-dihydroxy-3-methylpentanoate + NADP(+) = (S)-2-ethyl-2-hydroxy-3-oxobutanoate + NADPH + H(+). The protein operates within amino-acid biosynthesis; L-isoleucine biosynthesis; L-isoleucine from 2-oxobutanoate: step 2/4. It participates in amino-acid biosynthesis; L-valine biosynthesis; L-valine from pyruvate: step 2/4. Functionally, involved in the biosynthesis of branched-chain amino acids (BCAA). Catalyzes an alkyl-migration followed by a ketol-acid reduction of (S)-2-acetolactate (S2AL) to yield (R)-2,3-dihydroxy-isovalerate. In the isomerase reaction, S2AL is rearranged via a Mg-dependent methyl migration to produce 3-hydroxy-3-methyl-2-ketobutyrate (HMKB). In the reductase reaction, this 2-ketoacid undergoes a metal-dependent reduction by NADPH to yield (R)-2,3-dihydroxy-isovalerate. The protein is Ketol-acid reductoisomerase (NADP(+)) of Beijerinckia indica subsp. indica (strain ATCC 9039 / DSM 1715 / NCIMB 8712).